A 287-amino-acid polypeptide reads, in one-letter code: Bifunctional protein FolD (287 aa).

NADP(+)-binding positions include 169–171 (GRS) and S194.

This sequence belongs to the tetrahydrofolate dehydrogenase/cyclohydrolase family. In terms of assembly, homodimer.

It catalyses the reaction (6R)-5,10-methylene-5,6,7,8-tetrahydrofolate + NADP(+) = (6R)-5,10-methenyltetrahydrofolate + NADPH. It carries out the reaction (6R)-5,10-methenyltetrahydrofolate + H2O = (6R)-10-formyltetrahydrofolate + H(+). The protein operates within one-carbon metabolism; tetrahydrofolate interconversion. Catalyzes the oxidation of 5,10-methylenetetrahydrofolate to 5,10-methenyltetrahydrofolate and then the hydrolysis of 5,10-methenyltetrahydrofolate to 10-formyltetrahydrofolate. The protein is Bifunctional protein FolD of Albidiferax ferrireducens (strain ATCC BAA-621 / DSM 15236 / T118) (Rhodoferax ferrireducens).